A 288-amino-acid chain; its full sequence is HTH-type transcriptional repressor CarA (288 aa).

An HTH merR-type domain is found at 2-73 (TLRIRTIARM…VSEAIAQVKT (72 aa)). A DNA-binding region (H-T-H motif) is located at residues 5–24 (IRTIARMTGIREATLRAWER). Positions 162 to 288 (GPRALLACPS…NQVRNAQNRP (127 aa)) constitute a B12-binding domain.

Belongs to the CarA/CarH B12-binding photoregulator family. In terms of assembly, forms homodimers or oligomers. Interacts with CarS.

Its activity is regulated as follows. Binds cobalamin (vitamin B12), but cobalamin is not required for CarA activity. Interaction with CarS prevents binding to DNA. Its function is as follows. Negative regulator of the carB operon in the dark. Binds specifically to the CarA operator, in the region around the carB promoter, which blocks access to the RNA polymerase. The chain is HTH-type transcriptional repressor CarA (carA) from Myxococcus xanthus.